The sequence spans 261 residues: tRNA pseudouridine synthase A (261 aa).

Asp51 acts as the Nucleophile in catalysis. A substrate-binding site is contributed by Tyr109.

This sequence belongs to the tRNA pseudouridine synthase TruA family. Homodimer.

It catalyses the reaction uridine(38/39/40) in tRNA = pseudouridine(38/39/40) in tRNA. Its function is as follows. Formation of pseudouridine at positions 38, 39 and 40 in the anticodon stem and loop of transfer RNAs. The protein is tRNA pseudouridine synthase A of Shewanella baltica (strain OS223).